Consider the following 927-residue polypeptide: E3 ubiquitin-protein ligase HOS1 (927 aa).

Residues 53-93 (CRATRDLASCGRFVNYVLNPCGHASLCTECCQRCDVCPICR) form an RING-type; degenerate zinc finger. Disordered regions lie at residues 678 to 699 (SGQF…LPDA), 782 to 806 (FKDL…SPEV), and 832 to 927 (VKSS…FAAR). Residues 797–806 (KRTEESSPEV) show a composition bias toward basic and acidic residues. Polar residues-rich tracts occupy residues 832-851 (VKSS…STFF) and 878-892 (NNNN…NNSG). The segment covering 917-927 (KGRRRRRFAAR) has biased composition (basic residues).

Interacts with SCRM/ICE1, FLK and MSI4/FVE. As to expression, ubiquitously expressed with higher levels in leaf vasculature, roots and root tips.

It is found in the nucleus. Its subcellular location is the cytoplasm. The catalysed reaction is S-ubiquitinyl-[E2 ubiquitin-conjugating enzyme]-L-cysteine + [acceptor protein]-L-lysine = [E2 ubiquitin-conjugating enzyme]-L-cysteine + N(6)-ubiquitinyl-[acceptor protein]-L-lysine.. It participates in protein modification; protein ubiquitination. Functionally, E3 ubiquitin-protein ligase that mediates ubiquitination and subsequent proteasomal degradation of the transcription factor ICE1. Acts as a negative regulator of cold signaling pathways. Probably involved in recruiting the NUP107-160 subcomplex of the nuclear pore complex to chromatin. Controls flowering time in response to ambient temperatures (16 and 23 degrees Celsius) and intermittent cold, probably via the regulation of FT and TSF levels. This Arabidopsis thaliana (Mouse-ear cress) protein is E3 ubiquitin-protein ligase HOS1 (HOS1).